Reading from the N-terminus, the 236-residue chain is Leucyl/phenylalanyl-tRNA--protein transferase (236 aa).

The span at 1–13 shows a compositional bias: polar residues; that stretch reads MNSLSYLNQDQQS. A disordered region spans residues 1–22; sequence MNSLSYLNQDQQSFPPPEQALS.

The protein belongs to the L/F-transferase family.

Its subcellular location is the cytoplasm. The catalysed reaction is N-terminal L-lysyl-[protein] + L-leucyl-tRNA(Leu) = N-terminal L-leucyl-L-lysyl-[protein] + tRNA(Leu) + H(+). It catalyses the reaction N-terminal L-arginyl-[protein] + L-leucyl-tRNA(Leu) = N-terminal L-leucyl-L-arginyl-[protein] + tRNA(Leu) + H(+). The enzyme catalyses L-phenylalanyl-tRNA(Phe) + an N-terminal L-alpha-aminoacyl-[protein] = an N-terminal L-phenylalanyl-L-alpha-aminoacyl-[protein] + tRNA(Phe). In terms of biological role, functions in the N-end rule pathway of protein degradation where it conjugates Leu, Phe and, less efficiently, Met from aminoacyl-tRNAs to the N-termini of proteins containing an N-terminal arginine or lysine. In Shewanella piezotolerans (strain WP3 / JCM 13877), this protein is Leucyl/phenylalanyl-tRNA--protein transferase.